Here is a 288-residue protein sequence, read N- to C-terminus: tRNA pseudouridine synthase A (288 aa).

Aspartate 58 serves as the catalytic Nucleophile. Residue tyrosine 124 participates in substrate binding.

This sequence belongs to the tRNA pseudouridine synthase TruA family. In terms of assembly, homodimer.

It catalyses the reaction uridine(38/39/40) in tRNA = pseudouridine(38/39/40) in tRNA. In terms of biological role, formation of pseudouridine at positions 38, 39 and 40 in the anticodon stem and loop of transfer RNAs. This chain is tRNA pseudouridine synthase A, found in Corynebacterium diphtheriae (strain ATCC 700971 / NCTC 13129 / Biotype gravis).